Consider the following 745-residue polypeptide: VCP-like ATPase (745 aa).

ATP-binding positions include glycine 231 to threonine 238 and glycine 508 to threonine 515.

It belongs to the AAA ATPase family. CDC48 subfamily. In terms of assembly, homohexamer. Forms a ring-shaped particle.

The sequence is that of VCP-like ATPase (vat) from Thermoplasma acidophilum (strain ATCC 25905 / DSM 1728 / JCM 9062 / NBRC 15155 / AMRC-C165).